The sequence spans 768 residues: Ribonucleoside-diphosphate reductase large chain (768 aa).

Residues 7 to 8 (SK) and 13 to 19 (EKLGIDL) each bind ATP. The GDP site is built by Thr196 and Ser211. A disulfide bridge links Cys212 with Cys437. DTTP-binding positions include 220 to 222 (DSI), Lys237, and Arg250. Residue Asn420 participates in GDP binding. The Proton acceptor role is filled by Asn420. Cys422 acts as the Cysteine radical intermediate in catalysis. Glu424 is a GDP binding site. Catalysis depends on Glu424, which acts as the Proton acceptor.

Belongs to the ribonucleoside diphosphate reductase large chain family. In terms of assembly, heterodimer of a large and a small subunit.

It carries out the reaction a 2'-deoxyribonucleoside 5'-diphosphate + [thioredoxin]-disulfide + H2O = a ribonucleoside 5'-diphosphate + [thioredoxin]-dithiol. Its activity is regulated as follows. Under complex allosteric control mediated by deoxynucleoside triphosphates and ATP binding to separate specificity and activation sites on the large subunit. The type of nucleotide bound at the specificity site determines substrate preference. It seems probable that ATP makes the enzyme reduce CDP and UDP, dGTP favors ADP reduction and dTTP favors GDP reduction. Stimulated by ATP and inhibited by dATP binding to the activity site. Functionally, provides the precursors necessary for DNA synthesis. Catalyzes the biosynthesis of deoxyribonucleotides from the corresponding ribonucleotides. The chain is Ribonucleoside-diphosphate reductase large chain from Encephalitozoon cuniculi (strain GB-M1) (Microsporidian parasite).